Reading from the N-terminus, the 336-residue chain is Ribosomal RNA small subunit methyltransferase C (336 aa).

This sequence belongs to the methyltransferase superfamily. RsmC family. As to quaternary structure, monomer.

Its subcellular location is the cytoplasm. It carries out the reaction guanosine(1207) in 16S rRNA + S-adenosyl-L-methionine = N(2)-methylguanosine(1207) in 16S rRNA + S-adenosyl-L-homocysteine + H(+). Functionally, specifically methylates the guanine in position 1207 of 16S rRNA in the 30S particle. This Buchnera aphidicola subsp. Schizaphis graminum (strain Sg) protein is Ribosomal RNA small subunit methyltransferase C.